A 361-amino-acid polypeptide reads, in one-letter code: Aminomethyltransferase (361 aa).

Belongs to the GcvT family. As to quaternary structure, the glycine cleavage system is composed of four proteins: P, T, L and H.

The catalysed reaction is N(6)-[(R)-S(8)-aminomethyldihydrolipoyl]-L-lysyl-[protein] + (6S)-5,6,7,8-tetrahydrofolate = N(6)-[(R)-dihydrolipoyl]-L-lysyl-[protein] + (6R)-5,10-methylene-5,6,7,8-tetrahydrofolate + NH4(+). In terms of biological role, the glycine cleavage system catalyzes the degradation of glycine. The sequence is that of Aminomethyltransferase from Bacteroides thetaiotaomicron (strain ATCC 29148 / DSM 2079 / JCM 5827 / CCUG 10774 / NCTC 10582 / VPI-5482 / E50).